A 377-amino-acid polypeptide reads, in one-letter code: Pseudouridylate synthase RPUSD4, mitochondrial (377 aa).

The transit peptide at 1 to 46 (MAAPCLRTPGVQLLSMSSRPGRLFTPGSWSFCSSATSSRPLNAQRL) directs the protein to the mitochondrion. D153 is an active-site residue.

The protein belongs to the pseudouridine synthase RluA family. Interacts with 16S mt-rRNA, mt-tRNA(Phe) and mt-tRNA(Met). Forms a regulatory protein-RNA complex, consisting of RCC1L, NGRN, RPUSD3, RPUSD4, TRUB2, FASTKD2 and 16S mt-rRNA.

It is found in the mitochondrion matrix. The protein resides in the nucleus. Its subcellular location is the cytoplasm. The enzyme catalyses uridine in 5S rRNA = pseudouridine in 5S rRNA. The catalysed reaction is a uridine in tRNA = a pseudouridine in tRNA. It catalyses the reaction a uridine in mRNA = a pseudouridine in mRNA. In terms of biological role, catalyzes uridine to pseudouridine isomerization (pseudouridylation) of different mitochondrial RNA substrates. Acts on position 1397 in 16S mitochondrial ribosomal RNA (16S mt-rRNA). This modification is required for the assembly of 16S mt-rRNA into a functional mitochondrial ribosome. As a component of a functional protein-RNA module, consisting of RCC1L, NGRN, RPUSD3, RPUSD4, TRUB2, FASTKD2 and 16S mt-rRNA, controls 16S mt-rRNA abundance and is required for intra-mitochondrial translation. Acts on position 39 in mitochondrial tRNA(Phe). Also catalyzes pseudouridylation of mRNAs in nucleus: acts as a regulator of pre-mRNA splicing by mediating pseudouridylation of pre-mRNAs at locations associated with alternatively spliced regions. Pseudouridylation of pre-mRNAs near splice sites directly regulates mRNA splicing and mRNA 3'-end processing. This is Pseudouridylate synthase RPUSD4, mitochondrial from Mus musculus (Mouse).